The chain runs to 191 residues: Cell division protein SepF (191 aa).

The segment covering 156 to 167 (EEASPSNMSNKG) has biased composition (polar residues). The tract at residues 156–191 (EEASPSNMSNKGNDLISKETSPAPEPAWGETVATAL) is disordered.

It belongs to the SepF family. Homodimer. Interacts with FtsZ.

Its subcellular location is the cytoplasm. Cell division protein that is part of the divisome complex and is recruited early to the Z-ring. Probably stimulates Z-ring formation, perhaps through the cross-linking of FtsZ protofilaments. Its function overlaps with FtsA. In Prochlorococcus marinus (strain NATL2A), this protein is Cell division protein SepF.